Consider the following 185-residue polypeptide: Disulfide bond formation protein B (185 aa).

Residues 1–25 (MLLFFVILGIFVLTILKAISKQRWS) are Cytoplasmic-facing. A helical membrane pass occupies residues 26 to 42 (WLLLAASALSLELSALY). Residues 43–60 (FQHVMQLEPCVMCVYERL) are Periplasmic-facing. C52 and C55 are oxidised to a cystine. Residues 61 to 76 (AMLGILLAGLIGASSP) traverse the membrane as a helical segment. Topologically, residues 77–83 (NNVFIRL) are cytoplasmic. The chain crosses the membrane as a helical span at residues 84–101 (SAFLLWGISAVWGILLAI). Residues 102–156 (KHTDYQLHPSPFFTCDFFPNFPAWAPLHEWLPWLFNPTGDCSDIVWQFLGYSMPQ) are Periplasmic-facing. A disulfide bond links C116 and C142. The chain crosses the membrane as a helical span at residues 157-175 (WLIVSFSLYTLLFIIFAIS). At 176-185 (AVLKTKKQLF) the chain is on the cytoplasmic side.

It belongs to the DsbB family.

It localises to the cell inner membrane. Required for disulfide bond formation in some periplasmic proteins. Acts by oxidizing the DsbA protein. The sequence is that of Disulfide bond formation protein B from Psychromonas ingrahamii (strain DSM 17664 / CCUG 51855 / 37).